The chain runs to 143 residues: Large ribosomal subunit protein uL13 (143 aa).

It belongs to the universal ribosomal protein uL13 family. Part of the 50S ribosomal subunit.

Its function is as follows. This protein is one of the early assembly proteins of the 50S ribosomal subunit, although it is not seen to bind rRNA by itself. It is important during the early stages of 50S assembly. The chain is Large ribosomal subunit protein uL13 from Dichelobacter nodosus (strain VCS1703A).